Consider the following 394-residue polypeptide: NAD(P)H-quinone oxidoreductase subunit H (394 aa).

This sequence belongs to the complex I 49 kDa subunit family. NDH-1 can be composed of about 15 different subunits; different subcomplexes with different compositions have been identified which probably have different functions.

The protein localises to the cellular thylakoid membrane. The enzyme catalyses a plastoquinone + NADH + (n+1) H(+)(in) = a plastoquinol + NAD(+) + n H(+)(out). It carries out the reaction a plastoquinone + NADPH + (n+1) H(+)(in) = a plastoquinol + NADP(+) + n H(+)(out). In terms of biological role, NDH-1 shuttles electrons from an unknown electron donor, via FMN and iron-sulfur (Fe-S) centers, to quinones in the respiratory and/or the photosynthetic chain. The immediate electron acceptor for the enzyme in this species is believed to be plastoquinone. Couples the redox reaction to proton translocation, and thus conserves the redox energy in a proton gradient. Cyanobacterial NDH-1 also plays a role in inorganic carbon-concentration. The polypeptide is NAD(P)H-quinone oxidoreductase subunit H (Synechococcus sp. (strain CC9311)).